Reading from the N-terminus, the 141-residue chain is Holo-[acyl-carrier-protein] synthase (141 aa).

2 residues coordinate Mg(2+): Asp-8 and Glu-61.

The protein belongs to the P-Pant transferase superfamily. AcpS family. The cofactor is Mg(2+).

It is found in the cytoplasm. It catalyses the reaction apo-[ACP] + CoA = holo-[ACP] + adenosine 3',5'-bisphosphate + H(+). Transfers the 4'-phosphopantetheine moiety from coenzyme A to a Ser of acyl-carrier-protein. The chain is Holo-[acyl-carrier-protein] synthase from Rhodopseudomonas palustris (strain HaA2).